The primary structure comprises 76 residues: cAMP-dependent protein kinase inhibitor alpha (76 aa).

Position 2 is an N-acetylthreonine (Thr-2). A disordered region spans residues 49 to 76; sequence KTEGEDDGQRSSTEQSGEAQGEAAKSES.

It belongs to the PKI family. As to expression, present at high levels in skeletal muscle and brain but is present at lower levels in heart, testis and liver.

In terms of biological role, extremely potent competitive inhibitor of cAMP-dependent protein kinase activity, this protein interacts with the catalytic subunit of the enzyme after the cAMP-induced dissociation of its regulatory chains. The polypeptide is cAMP-dependent protein kinase inhibitor alpha (Pkia) (Mus musculus (Mouse)).